The following is a 210-amino-acid chain: Ion-translocating oxidoreductase complex subunit G (210 aa).

Residues 9–29 (SLVLALFAIAATALVTITYAL) form a helical membrane-spanning segment. Position 176 is an FMN phosphoryl threonine (T176).

This sequence belongs to the RnfG family. The complex is composed of six subunits: RnfA, RnfB, RnfC, RnfD, RnfE and RnfG. The cofactor is FMN.

The protein resides in the cell inner membrane. Functionally, part of a membrane-bound complex that couples electron transfer with translocation of ions across the membrane. This chain is Ion-translocating oxidoreductase complex subunit G, found in Aliivibrio fischeri (strain MJ11) (Vibrio fischeri).